The sequence spans 446 residues: uncharacterized protein (446 aa).

The tract at residues 141-282 is disordered; that stretch reads TEAETNGTRP…GPKPKVKRVS (142 aa). The segment covering 159–170 has biased composition (polar residues); it reads NSGSKPKAGTQS. Positions 194–210 are enriched in basic and acidic residues; that stretch reads IKSERRSISQGGEKDKA. A phosphoserine mark is found at serine 200, serine 202, serine 212, and serine 214. Low complexity-rich tracts occupy residues 211 to 221 and 229 to 239; these read SSSSPSSSQQS and SPSQQNSRSSS. Serine 251 is modified (phosphoserine). The segment covering 269–280 has biased composition (basic residues); that stretch reads GKSRGPKPKVKR. Phosphoserine occurs at positions 282 and 307.

This is an uncharacterized protein from Drosophila melanogaster (Fruit fly).